Here is a 740-residue protein sequence, read N- to C-terminus: UvrABC system protein B (740 aa).

The segment at 1–36 (MTIAIRTTLDEPENHSDFVPHRPSRPEKTEPSKPFR) is disordered. The segment covering 8 to 33 (TLDEPENHSDFVPHRPSRPEKTEPSK) has biased composition (basic and acidic residues). One can recognise a Helicase ATP-binding domain in the interval 56–444 (KDIQKGERDQ…GGVFVEQIIR (389 aa)). 69 to 76 (GVTGSGKT) provides a ligand contact to ATP. The short motif at 122–145 (YYDYYQPEAYVPRTDTYIEKDSAI) is the Beta-hairpin element. Residues 461-627 (QVDNLIFEAK…TVKRQVDDIV (167 aa)) form the Helicase C-terminal domain. The UVR domain maps to 651–686 (ARSISETEKEMLEAAANLEFEKAAQLRDVLHQLKRQ). The interval 687–740 (ELGLPPEKSSEIQGRSEAGRPGTRKTRSDKAREAKASKRVKQEAGEKLLRSRGH) is disordered. The span at 712–740 (TRSDKAREAKASKRVKQEAGEKLLRSRGH) shows a compositional bias: basic and acidic residues.

It belongs to the UvrB family. Forms a heterotetramer with UvrA during the search for lesions. Interacts with UvrC in an incision complex.

It localises to the cytoplasm. The UvrABC repair system catalyzes the recognition and processing of DNA lesions. A damage recognition complex composed of 2 UvrA and 2 UvrB subunits scans DNA for abnormalities. Upon binding of the UvrA(2)B(2) complex to a putative damaged site, the DNA wraps around one UvrB monomer. DNA wrap is dependent on ATP binding by UvrB and probably causes local melting of the DNA helix, facilitating insertion of UvrB beta-hairpin between the DNA strands. Then UvrB probes one DNA strand for the presence of a lesion. If a lesion is found the UvrA subunits dissociate and the UvrB-DNA preincision complex is formed. This complex is subsequently bound by UvrC and the second UvrB is released. If no lesion is found, the DNA wraps around the other UvrB subunit that will check the other stand for damage. The protein is UvrABC system protein B of Zymomonas mobilis subsp. mobilis (strain ATCC 31821 / ZM4 / CP4).